A 393-amino-acid chain; its full sequence is PxcA-like protein (393 aa).

4 helical membrane-spanning segments follow: residues 173–193 (FLIV…NLVF), 271–291 (IVNL…IIVF), 306–326 (FLAL…DMFV), and 354–374 (VYIF…LLIF).

It belongs to the CemA family. PxcL subfamily.

It is found in the cell inner membrane. Its function is as follows. Together with PxcA, contributes to transient H(+) uptake following dark to light transition. Required for H(+) influx to activate the Calvin-Benson-Bassham cycle. May also be involved in CO(2) transport. In Synechocystis sp. (strain ATCC 27184 / PCC 6803 / Kazusa), this protein is PxcA-like protein.